Here is a 208-residue protein sequence, read N- to C-terminus: Small ribosomal subunit protein uS5 (208 aa).

The S5 DRBM domain occupies 28–91; it reads LEERLIYANR…EKAKKNVIRV (64 aa).

The protein belongs to the universal ribosomal protein uS5 family. In terms of assembly, part of the 30S ribosomal subunit. Contacts proteins S4 and S8.

Its function is as follows. With S4 and S12 plays an important role in translational accuracy. In terms of biological role, located at the back of the 30S subunit body where it stabilizes the conformation of the head with respect to the body. This Aquifex aeolicus (strain VF5) protein is Small ribosomal subunit protein uS5.